We begin with the raw amino-acid sequence, 360 residues long: DNA replication and repair protein RecF (360 aa).

Residue G30–T37 participates in ATP binding.

It belongs to the RecF family.

It localises to the cytoplasm. Its function is as follows. The RecF protein is involved in DNA metabolism; it is required for DNA replication and normal SOS inducibility. RecF binds preferentially to single-stranded, linear DNA. It also seems to bind ATP. The polypeptide is DNA replication and repair protein RecF (Shewanella piezotolerans (strain WP3 / JCM 13877)).